The primary structure comprises 696 residues: DNA-directed RNA polymerase subunit beta' (696 aa).

Cysteine 69, cysteine 71, cysteine 87, and cysteine 90 together coordinate Zn(2+). Mg(2+) contacts are provided by aspartate 504, aspartate 506, and aspartate 508.

This sequence belongs to the RNA polymerase beta' chain family. RpoC1 subfamily. In plastids the minimal PEP RNA polymerase catalytic core is composed of four subunits: alpha, beta, beta', and beta''. When a (nuclear-encoded) sigma factor is associated with the core the holoenzyme is formed, which can initiate transcription. It depends on Mg(2+) as a cofactor. Zn(2+) serves as cofactor.

The protein localises to the plastid. It localises to the chloroplast. It carries out the reaction RNA(n) + a ribonucleoside 5'-triphosphate = RNA(n+1) + diphosphate. In terms of biological role, DNA-dependent RNA polymerase catalyzes the transcription of DNA into RNA using the four ribonucleoside triphosphates as substrates. This is DNA-directed RNA polymerase subunit beta' from Pinus koraiensis (Korean pine).